The chain runs to 313 residues: Cilia- and flagella-associated protein 36 (313 aa).

Phosphoserine is present on residues Ser85 and Ser147. A coiled-coil region spans residues 147–187 (SDLEQEEMKILKEVLRKSKEEYDQEEERKRKKQLSEAKTEE). Disordered stretches follow at residues 165-204 (KEEY…SQGD) and 262-292 (KIKQ…TAEE). The span at 179–189 (QLSEAKTEEHP) shows a compositional bias: basic and acidic residues. Over residues 192–203 (ANETAKMSNSQG) the composition is skewed to polar residues. Position 201 is a phosphoserine (Ser201). Positions 271-292 (QKGKPAGEVEEMTEKPEMTAEE) are enriched in basic and acidic residues.

Belongs to the CFAP36 family. Interacts with ARL3.

It is found in the nucleus. Its subcellular location is the cytoplasm. The protein localises to the cell projection. The protein resides in the cilium. It localises to the flagellum. Its function is as follows. May act as an effector for ARL3. This is Cilia- and flagella-associated protein 36 from Bos taurus (Bovine).